The chain runs to 1828 residues: MAPWRKTDKERHGVAIYNFQGSEAQHLTLQIGDVVRIQETCGDWYRGYLIKHKLSQGIFPTSFIHLKEVTVEKRRNIENIIPAEIPLAQEVTTTLWEWGSIWKQLYVASKKERFLQVQSMMYDLMEWRSQLLSGTLPKDELKELKQKVTSKIDYGNKILELDLIVRDEDGNILDPDKTSVISLFHAHEEATYKITERIKEEMSKDQPDYGVYSRISSSPTHSLYVFVRNFVCRIGEDAELFMSLYDPHKQTVISENYLVRWGSKGFPKEIEMLNNLKVVFTDLGNKDLNRDKIFLICQIVRIGKMDLKDINAKKCTQGLRRPFGVAVMDITDIIKGKAESDEEKQHFIPFHPVSAENDFLHSLLGKVIASKGDSGGQGLWVTMKMLVGDIIQIRKDYPHLVDRTTVVARKLGFPEIIMPGDVRNDIYITLLQGDFDKYTKTTQRNVEVIMCVCTEDGKVLPNAICVGAGDKAMNEYHSVVYYQVKQPRWMETVKVAVPIEDMQRIHLRFMFRHRSSLESKDKGEKNFAMSYVKLMKEDGTTLHDGYHELVVLKGDSKKMEDASAYLTLPSYRHPVENKGATLSRSSSSVGGLSVSSRDVFSISTLVCSTKLTQNVGLLGLLKWRMKPQLLQENLEKLKIVDGEEVVKFLQDTLDALFNIMMEHSQSNEYDILVFDALIYIIGLIADRKFQHFNTVLEAYIQQHFSATLAYKKLMTVLKTYLDTSSRGEQCEPILRTLKALEYVFKFIVRSRTLFSQLYEGKEQMEFEESMRRLFESINNLMKSQYKTTILLQVAALKYIPSVLHDVETVFDAKLLSQLLYEFYTCIPPVKLQKQKVQSMNEIVQSNLFKKQECRDILLPVITKELKELLEQRDDGQHQAEKKHCVELLNSILEVLSCQDAAFTYDHIQEIMVQLLRTVNRTVITMGRDHALISHFVACMTAILDQMGDQHYSFYIETFQTSSDLVDFLMETFIMFKDLIGKNVYPGDWMAMSMVQNRVFLRAINKFAETMNQKFLEHTSFEFQLWNNYFHLAVAFITQDSLQLEQFTHAKYNKILNKYGDMRRLIGFSIRDMWYKLGQNKICFIPGMVGPILEMTLIPEAELRKATIPIFFDMMLCEYQRTGAFKKFENEIILKLDHEVEGGRGDEQYMQLLESILMECTAEHPTIAKSVENFVSLVKGLLEKLLDYRGVMTDESKDNRMSCTVNLLNFYKDNNREEMYIRYLYKLRDLHLDCENYTEAAYTLLLHTWLLKWSDEQCASQVMQTGQQHPQTHRQLKETLYETIIGYFDKGKMWEEAISLCKELAEQYEMEIFDYELLSQNLTQQAKFYENIMKILRTKPDYFAVGYYGQGFPSFLRNKVFIYRGKEYERREDFQMQLLSQFPNAEKMNTTSAPGDDVRNAPGQYIQCFTVQPVLDEHPRFKNKPVPDQIINFYKSNYVQKFHYSRPVRRGKVDPENEFASMWIERTSFLTAYKLPGILRWFEVVHMSQTTISPLENAIETMSTVNEKILMMINQYQSDESLPINPLSMLLNGIVDPAVMGGFAKYEKAFFTEEYSREHPEDQDKLSHLKDLIAWQIPFLGAGIKIHEKRVSDNLRPFHDRMEECFKNLKMKVEKEYGVREMPDFEDRRVGRPRSMLRSYRQMSVISLASMHSDCSTPSKVPAESFDLESAPPKTPKVEEEPISPGSTLPEVKLRRSKKRTKRSSVVFADEKAATESDLKRLSRKQEFMSDTNLSEHAAIPARVSILSQMSFASQSMPTIPALTLSVAGVPGLDEANTSPRLSQTFFQVSDGDKKTLKKKKVNQFFKTMLASKSSEESKQIPDFLSTNM.

Positions 8–69 (DKERHGVAIY…PTSFIHLKEV (62 aa)) constitute an SH3 domain. Residue K304 is modified to N6-acetyllysine. The C2 DOCK-type domain occupies 423–607 (RNDIYITLLQ…DVFSISTLVC (185 aa)). Phosphoserine is present on residues S588 and S593. The residue at position 738 (K738) is an N6-acetyllysine. In terms of domain architecture, DOCKER spans 1210–1621 (YKDNNREEMY…VEKEYGVREM (412 aa)). Residues 1652-1703 (SDCSTPSKVPAESFDLESAPPKTPKVEEEPISPGSTLPEVKLRRSKKRTKRS) are disordered. Phosphoserine occurs at positions 1683, 1704, 1729, and 1782.

This sequence belongs to the DOCK family. As to quaternary structure, homodimer. Interacts with RAC1 and RAC2. Interacts with CRKL and VAV. Interacts with CD3Z. As to expression, specifically expressed in hematopoietic cells.

The protein localises to the endomembrane system. It localises to the cytoplasm. It is found in the cytoskeleton. Involved in cytoskeletal rearrangements required for lymphocyte migration in response of chemokines. Activates RAC1 and RAC2, but not CDC42, by functioning as a guanine nucleotide exchange factor (GEF), which exchanges bound GDP for free GTP. May also participate in IL2 transcriptional activation via the activation of RAC2. This chain is Dedicator of cytokinesis protein 2 (Dock2), found in Mus musculus (Mouse).